The chain runs to 427 residues: Glutamyl-tRNA reductase (427 aa).

Substrate is bound by residues 49–52 (TCNR), S105, 110–112 (EPQ), and Q116. C50 (nucleophile) is an active-site residue. 185–190 (AAGEMN) contacts NADP(+).

It belongs to the glutamyl-tRNA reductase family. As to quaternary structure, homodimer.

The enzyme catalyses (S)-4-amino-5-oxopentanoate + tRNA(Glu) + NADP(+) = L-glutamyl-tRNA(Glu) + NADPH + H(+). It functions in the pathway porphyrin-containing compound metabolism; protoporphyrin-IX biosynthesis; 5-aminolevulinate from L-glutamyl-tRNA(Glu): step 1/2. In terms of biological role, catalyzes the NADPH-dependent reduction of glutamyl-tRNA(Glu) to glutamate 1-semialdehyde (GSA). The polypeptide is Glutamyl-tRNA reductase (Acinetobacter baumannii (strain AB307-0294)).